Reading from the N-terminus, the 651-residue chain is MSESEAKSRSATPPSKAKQATPTTTAAANGEKKLTNKELKELKKQEKAAKRAAMKQANGISIEQQQQQAQMKKEKKQLQREQQQKREQKQKNANKKKQNERNVKKSTLFGHLETTEERRATILALTSAVSSPKTSRITAAGLMVPVVASALSGSNVLTASSLMPVGPNASSTVSASAPASTTTTLPASSAALSAGTSSASTNTPTAIQQEIASSNASDVAKTLASISLEAGEFNVIPGISSVIPTVLEQSFDNSSLISSVKELLLNKDLIHPSILLLTSHLAHYKIVGSIPRCIAMLEVFQIVIKDYQTPKGTTLSRNLTSYLSHQIDLLKKARPLSVTMGNAIRWLKQEISLIDPSTPDKAAKKDLCEKIGQFAKEKIELADQLIIDNASTQIEESTTIVTYGSSKVLTELLLHNAISLKKNIKVIVVDSRPLFEGRKMAETLRNAGVNVMYALITSLDTIFNMDVDYVFLGAHSILSNGFLYSRAGTAMLAMSAKRRNIPVLVCCESLKFSQRVQLDSVTFNELADPNDLVNIDYENPVERRGNKGALLNQFIKERKFEKKKLAMENKPKGNKIGGKKGSEGESKDASNEEDSNSKNILDGWQELPSLNIVNILYDLTPPEYIKKVITEFGALPPSSVPVILREYKGSA.

Residues 1-108 (MSESEAKSRS…NERNVKKSTL (108 aa)) form a disordered region. Serine 2 is modified (N-acetylserine). The segment covering 11–28 (ATPPSKAKQATPTTTAAA) has biased composition (low complexity). Basic and acidic residues-rich tracts occupy residues 30 to 49 (GEKK…EKAA) and 76 to 90 (KQLQ…EQKQ). Serine 106 carries the post-translational modification Phosphoserine. Threonine 121 carries the post-translational modification Phosphothreonine. Residues 566–600 (AMENKPKGNKIGGKKGSEGESKDASNEEDSNSKNI) form a disordered region. Positions 580 to 590 (KGSEGESKDAS) are enriched in basic and acidic residues.

This sequence belongs to the eIF-2B alpha/beta/delta subunits family. As to quaternary structure, component of the translation initiation factor 2B (eIF2B) complex which is a heterodecamer of two sets of five different subunits: alpha, beta, gamma, delta and epsilon. Subunits alpha, beta and delta comprise a regulatory subcomplex and subunits epsilon and gamma comprise a catalytic subcomplex. Within the complex, the hexameric regulatory complex resides at the center, with the two heterodimeric catalytic subcomplexes bound on opposite sides.

The protein resides in the cytoplasm. It is found in the cytosol. In terms of biological role, acts as a component of the translation initiation factor 2B (eIF2B) complex, which catalyzes the exchange of GDP for GTP on the eukaryotic initiation factor 2 (eIF2) complex gamma subunit. Its guanine nucleotide exchange factor activity is repressed when bound to eIF2 complex phosphorylated on the alpha subunit, thereby limiting the amount of methionyl-initiator methionine tRNA available to the ribosome and consequently global translation is repressed. It activates the synthesis of GCN4 in yeast under amino acid starvation conditions by suppressing the inhibitory effects of multiple AUG codons present in the leader of GCN4 mRNA. It may promote either repression or activation of GCN4 expression depending on amino acid availability. GCD2 is also required for cell viability. Its function can partially be replaced by GCN3 under normal growth conditions in GCD2-defective mutants, under AA starvation conditions GCN3 is an antagonist (GCN4 translational activator). In Saccharomyces cerevisiae (strain ATCC 204508 / S288c) (Baker's yeast), this protein is Translation initiation factor eIF2B subunit delta (GCD2).